A 143-amino-acid chain; its full sequence is 3-hydroxyacyl-[acyl-carrier-protein] dehydratase FabZ (143 aa).

The active site involves H49.

The protein belongs to the thioester dehydratase family. FabZ subfamily.

Its subcellular location is the cytoplasm. It carries out the reaction a (3R)-hydroxyacyl-[ACP] = a (2E)-enoyl-[ACP] + H2O. Functionally, involved in unsaturated fatty acids biosynthesis. Catalyzes the dehydration of short chain beta-hydroxyacyl-ACPs and long chain saturated and unsaturated beta-hydroxyacyl-ACPs. This Wolbachia pipientis subsp. Culex pipiens (strain wPip) protein is 3-hydroxyacyl-[acyl-carrier-protein] dehydratase FabZ.